A 582-amino-acid chain; its full sequence is TRAF-type zinc finger domain-containing protein 1 (582 aa).

The residue at position 2 (alanine 2) is an N-acetylalanine. A TRAF-type zinc finger spans residues 27–103 (IHEIHCQRNI…DLELSILKLK (77 aa)). Position 191 is a phosphoserine (serine 191). Residues 217-236 (EQERQERNRGQQPPKEGGEE) are disordered. Phosphoserine is present on residues serine 278, serine 320, serine 326, serine 327, serine 409, serine 415, serine 430, and serine 470. The disordered stretch occupies residues 401-582 (TEGIPRLDSQ…AGDAEEEEEE (182 aa)). Polar residues-rich tracts occupy residues 454-471 (PINN…STSG) and 486-495 (LSNSDSQDIQ).

Interacts with MAVS, TICAM1, TRAF1, TRAF2, TRAF3. Interacts with TRAF6.

Negative feedback regulator that controls excessive innate immune responses. Regulates both Toll-like receptor 4 (TLR4) and DDX58/RIG1-like helicases (RLH) pathways. May inhibit the LTR pathway by direct interaction with TRAF6 and attenuation of NF-kappa-B activation. May negatively regulate the RLH pathway downstream from MAVS and upstream of NF-kappa-B and IRF3. In Homo sapiens (Human), this protein is TRAF-type zinc finger domain-containing protein 1 (TRAFD1).